A 491-amino-acid chain; its full sequence is Lysine--tRNA ligase (491 aa).

Mg(2+) is bound by residues E398 and E405.

This sequence belongs to the class-II aminoacyl-tRNA synthetase family. Homodimer. The cofactor is Mg(2+).

The protein resides in the cytoplasm. It carries out the reaction tRNA(Lys) + L-lysine + ATP = L-lysyl-tRNA(Lys) + AMP + diphosphate. This chain is Lysine--tRNA ligase, found in Mycoplasmopsis synoviae (strain 53) (Mycoplasma synoviae).